Here is a 251-residue protein sequence, read N- to C-terminus: Probable transcriptional regulatory protein RSal33209_2002 (251 aa).

Belongs to the TACO1 family.

It is found in the cytoplasm. The chain is Probable transcriptional regulatory protein RSal33209_2002 from Renibacterium salmoninarum (strain ATCC 33209 / DSM 20767 / JCM 11484 / NBRC 15589 / NCIMB 2235).